The chain runs to 297 residues: Protein COFACTOR ASSEMBLY OF COMPLEX C SUBUNIT B CCB4, chloroplastic (297 aa).

The N-terminal 33 residues, 1-33, are a transit peptide targeting the chloroplast; it reads MEARIILLRIQIPWSANRQFSHPPLDFPRFIRA. Over 34-70 the chain is Stromal; that stretch reads SSSSTSQKPKTYEGPKPRKNLVADFISKNDDLVRSLP. A helical membrane pass occupies residues 71-91; sequence IYVGGASLLAVLFNRTVSGIA. The Lumenal portion of the chain corresponds to 92–103; that stretch reads PVADASSSQSRA. Residues 104–124 traverse the membrane as a helical segment; that stretch reads DLLALGLAVTNLLTGLVWLSI. Topologically, residues 125–297 are stromal; it reads RPKSITPVNP…DSDEISRVTV (173 aa).

It is found in the plastid. It localises to the chloroplast thylakoid membrane. Required for the biogenesis and accumulation of native cytochrome b6 in the thylakoid membrane. Controls the conversion of apocytochrome b6 to holocytochrome b6. Required for covalent binding of the c-type heme to cytochrome b6. The polypeptide is Protein COFACTOR ASSEMBLY OF COMPLEX C SUBUNIT B CCB4, chloroplastic (Arabidopsis thaliana (Mouse-ear cress)).